Consider the following 340-residue polypeptide: Phosphate acyltransferase (340 aa).

The protein belongs to the PlsX family. In terms of assembly, homodimer. Probably interacts with PlsY.

The protein localises to the cytoplasm. The enzyme catalyses a fatty acyl-[ACP] + phosphate = an acyl phosphate + holo-[ACP]. It participates in lipid metabolism; phospholipid metabolism. Its function is as follows. Catalyzes the reversible formation of acyl-phosphate (acyl-PO(4)) from acyl-[acyl-carrier-protein] (acyl-ACP). This enzyme utilizes acyl-ACP as fatty acyl donor, but not acyl-CoA. The protein is Phosphate acyltransferase of Pseudomonas syringae pv. tomato (strain ATCC BAA-871 / DC3000).